Consider the following 762-residue polypeptide: 5-methyltetrahydropteroyltriglutamate--homocysteine methyltransferase (762 aa).

5-methyltetrahydropteroyltri-L-glutamate-binding positions include 17-20 (REWK) and K111. Residues 435-437 (IGS) and E488 contribute to the L-homocysteine site. L-methionine-binding positions include 435–437 (IGS) and E488. 5-methyltetrahydropteroyltri-L-glutamate is bound by residues 519-520 (RC) and W565. L-homocysteine is bound at residue D603. D603 contributes to the L-methionine binding site. E609 contacts 5-methyltetrahydropteroyltri-L-glutamate. The Zn(2+) site is built by H645, C647, and E669. H698 (proton donor) is an active-site residue. C730 contributes to the Zn(2+) binding site.

Belongs to the vitamin-B12 independent methionine synthase family. Zn(2+) is required as a cofactor.

It catalyses the reaction 5-methyltetrahydropteroyltri-L-glutamate + L-homocysteine = tetrahydropteroyltri-L-glutamate + L-methionine. Its pathway is amino-acid biosynthesis; L-methionine biosynthesis via de novo pathway; L-methionine from L-homocysteine (MetE route): step 1/1. Catalyzes the transfer of a methyl group from 5-methyltetrahydrofolate to homocysteine resulting in methionine formation. This is 5-methyltetrahydropteroyltriglutamate--homocysteine methyltransferase from Bacillus cereus (strain AH187).